Reading from the N-terminus, the 354-residue chain is Protein FAM181A (354 aa).

Basic and acidic residues-rich tracts occupy residues 1 to 14 (MPLE…ERND) and 129 to 142 (YLKR…RRLL). 3 disordered regions span residues 1–35 (MPLE…KQVS), 117–160 (LPRG…CKEK), and 172–193 (AKEQ…VPMR).

This sequence belongs to the FAM181 family.

This is Protein FAM181A (FAM181A) from Homo sapiens (Human).